Consider the following 637-residue polypeptide: Biosynthetic arginine decarboxylase (637 aa).

An N6-(pyridoxal phosphate)lysine modification is found at Lys-101. 286–296 provides a ligand contact to substrate; the sequence is FDVGGGLAVDY.

The protein belongs to the Orn/Lys/Arg decarboxylase class-II family. SpeA subfamily. Mg(2+) is required as a cofactor. Requires pyridoxal 5'-phosphate as cofactor.

The enzyme catalyses L-arginine + H(+) = agmatine + CO2. It participates in amine and polyamine biosynthesis; agmatine biosynthesis; agmatine from L-arginine: step 1/1. Catalyzes the biosynthesis of agmatine from arginine. This chain is Biosynthetic arginine decarboxylase, found in Shewanella sediminis (strain HAW-EB3).